Here is a 394-residue protein sequence, read N- to C-terminus: Elongation factor Tu (394 aa).

The 195-residue stretch at 10 to 204 (KPHVNVGTIG…HLDTYIPEPE (195 aa)) folds into the tr-type G domain. The tract at residues 19-26 (GHVDHGKT) is G1. Residue 19–26 (GHVDHGKT) coordinates GTP. Position 26 (Thr26) interacts with Mg(2+). A G2 region spans residues 60–64 (GITIN). Positions 81-84 (DCPG) are G3. Residues 81–85 (DCPGH) and 136–139 (NKCD) each bind GTP. Residues 136-139 (NKCD) are G4. Residues 174 to 176 (SAL) are G5.

This sequence belongs to the TRAFAC class translation factor GTPase superfamily. Classic translation factor GTPase family. EF-Tu/EF-1A subfamily. Monomer.

The protein resides in the cytoplasm. The catalysed reaction is GTP + H2O = GDP + phosphate + H(+). In terms of biological role, GTP hydrolase that promotes the GTP-dependent binding of aminoacyl-tRNA to the A-site of ribosomes during protein biosynthesis. The polypeptide is Elongation factor Tu (Actinobacillus pleuropneumoniae serotype 5b (strain L20)).